The sequence spans 176 residues: dCTP deaminase (176 aa).

DCTP-binding positions include 102–107 (RSTFAR) and aspartate 118. Glutamate 128 acts as the Proton donor/acceptor in catalysis. Tyrosine 160 and glutamine 167 together coordinate dCTP.

Belongs to the dCTP deaminase family. Homotrimer.

It carries out the reaction dCTP + H2O + H(+) = dUTP + NH4(+). It functions in the pathway pyrimidine metabolism; dUMP biosynthesis; dUMP from dCTP (dUTP route): step 1/2. In terms of biological role, catalyzes the deamination of dCTP to dUTP. The protein is dCTP deaminase of Hyperthermus butylicus (strain DSM 5456 / JCM 9403 / PLM1-5).